The chain runs to 89 residues: UPF0367 protein PMM0124 (89 aa).

This sequence belongs to the UPF0367 family.

The protein is UPF0367 protein PMM0124 of Prochlorococcus marinus subsp. pastoris (strain CCMP1986 / NIES-2087 / MED4).